Reading from the N-terminus, the 230-residue chain is Fibrillarin-like rRNA/tRNA 2'-O-methyltransferase (230 aa).

S-adenosyl-L-methionine-binding positions include 89-90, 107-108, 132-133, and 152-155; these read TT, EV, DA, and DISQ.

Belongs to the methyltransferase superfamily. Fibrillarin family. As to quaternary structure, interacts with nop5. Component of box C/D small ribonucleoprotein (sRNP) particles that contain rpl7ae, FlpA and nop5, plus a guide RNA.

In terms of biological role, involved in pre-rRNA and tRNA processing. Utilizes the methyl donor S-adenosyl-L-methionine to catalyze the site-specific 2'-hydroxyl methylation of ribose moieties in rRNA and tRNA. Site specificity is provided by a guide RNA that base pairs with the substrate. Methylation occurs at a characteristic distance from the sequence involved in base pairing with the guide RNA. The polypeptide is Fibrillarin-like rRNA/tRNA 2'-O-methyltransferase (Thermoplasma acidophilum (strain ATCC 25905 / DSM 1728 / JCM 9062 / NBRC 15155 / AMRC-C165)).